The following is a 228-amino-acid chain: DNA mismatch repair protein MutH (228 aa).

This sequence belongs to the MutH family.

It is found in the cytoplasm. Sequence-specific endonuclease that cleaves unmethylated GATC sequences. It is involved in DNA mismatch repair. This is DNA mismatch repair protein MutH from Yersinia enterocolitica serotype O:8 / biotype 1B (strain NCTC 13174 / 8081).